The sequence spans 247 residues: Uridylate kinase (247 aa).

Residue 18–21 coordinates ATP; it reads KLSG. Gly60 is a UMP binding site. 2 residues coordinate ATP: Gly61 and Arg65. UMP contacts are provided by residues Asp80 and 141 to 148; that span reads TGNPFFTT. Residues Thr168, Tyr174, and Asp177 each contribute to the ATP site.

The protein belongs to the UMP kinase family. In terms of assembly, homohexamer.

It is found in the cytoplasm. The enzyme catalyses UMP + ATP = UDP + ADP. The protein operates within pyrimidine metabolism; CTP biosynthesis via de novo pathway; UDP from UMP (UMPK route): step 1/1. Inhibited by UTP. In terms of biological role, catalyzes the reversible phosphorylation of UMP to UDP. This Pseudomonas savastanoi pv. phaseolicola (strain 1448A / Race 6) (Pseudomonas syringae pv. phaseolicola (strain 1448A / Race 6)) protein is Uridylate kinase.